Consider the following 319-residue polypeptide: MVEAVKVSELVKDLPSLRVVEGKEYLDQKLINTSDISRPGLELTGYFDFYPKNRIQLLGRTEISYSARLDHDLRERVFNKMATPETPCFIVSRGLPIPSEMLEAAEKEKIPVLSSNMATTHLSSVITQFLDEKLAPRKSIHGVLVEIYGMGVLIIGNSGVGKSETALDLVKRGHRLIADDRVDVYQKDDKTVVGEAPKILKHLMEIRGIGIIDVMNLFGAGAVKDSTEIQLIICLQNWDPKANYDRLGFNEKTREIFEVDVPQVTVPVKVGRNLAIIIEVAAMNFRAKKMGYDASQKFEQNLTELISDNSKKDEGDSRK.

Active-site residues include histidine 141 and lysine 162. Position 156–163 (glycine 156–serine 163) interacts with ATP. Residue serine 163 participates in Mg(2+) binding. The active-site Proton acceptor; for phosphorylation activity. Proton donor; for dephosphorylation activity is the aspartate 180. An important for the catalytic mechanism of both phosphorylation and dephosphorylation region spans residues methionine 204–aspartate 213. Glutamate 205 contacts Mg(2+). The active site involves arginine 246. The segment at proline 267–arginine 272 is important for the catalytic mechanism of dephosphorylation.

The protein belongs to the HPrK/P family. In terms of assembly, homohexamer. Mg(2+) serves as cofactor.

The catalysed reaction is [HPr protein]-L-serine + ATP = [HPr protein]-O-phospho-L-serine + ADP + H(+). The enzyme catalyses [HPr protein]-O-phospho-L-serine + phosphate + H(+) = [HPr protein]-L-serine + diphosphate. Its function is as follows. Catalyzes the ATP- as well as the pyrophosphate-dependent phosphorylation of a specific serine residue in HPr, a phosphocarrier protein of the phosphoenolpyruvate-dependent sugar phosphotransferase system (PTS). HprK/P also catalyzes the pyrophosphate-producing, inorganic phosphate-dependent dephosphorylation (phosphorolysis) of seryl-phosphorylated HPr (P-Ser-HPr). The two antagonistic activities of HprK/P are regulated by several intracellular metabolites, which change their concentration in response to the absence or presence of rapidly metabolisable carbon sources (glucose, fructose, etc.) in the growth medium. Therefore, by controlling the phosphorylation state of HPr, HPrK/P is a sensor enzyme that plays a major role in the regulation of carbon metabolism and sugar transport: it mediates carbon catabolite repression (CCR), and regulates PTS-catalyzed carbohydrate uptake and inducer exclusion. The sequence is that of HPr kinase/phosphorylase from Lactobacillus johnsonii (strain CNCM I-12250 / La1 / NCC 533).